The primary structure comprises 60 residues: Large ribosomal subunit protein bL32 (60 aa).

This sequence belongs to the bacterial ribosomal protein bL32 family.

The protein is Large ribosomal subunit protein bL32 of Kosmotoga olearia (strain ATCC BAA-1733 / DSM 21960 / TBF 19.5.1).